Consider the following 178-residue polypeptide: ATP synthase subunit delta (178 aa).

The protein belongs to the ATPase delta chain family. As to quaternary structure, F-type ATPases have 2 components, F(1) - the catalytic core - and F(0) - the membrane proton channel. F(1) has five subunits: alpha(3), beta(3), gamma(1), delta(1), epsilon(1). F(0) has three main subunits: a(1), b(2) and c(10-14). The alpha and beta chains form an alternating ring which encloses part of the gamma chain. F(1) is attached to F(0) by a central stalk formed by the gamma and epsilon chains, while a peripheral stalk is formed by the delta and b chains.

The protein resides in the cell membrane. In terms of biological role, f(1)F(0) ATP synthase produces ATP from ADP in the presence of a proton or sodium gradient. F-type ATPases consist of two structural domains, F(1) containing the extramembraneous catalytic core and F(0) containing the membrane proton channel, linked together by a central stalk and a peripheral stalk. During catalysis, ATP synthesis in the catalytic domain of F(1) is coupled via a rotary mechanism of the central stalk subunits to proton translocation. Functionally, this protein is part of the stalk that links CF(0) to CF(1). It either transmits conformational changes from CF(0) to CF(1) or is implicated in proton conduction. This Anoxybacillus flavithermus (strain DSM 21510 / WK1) protein is ATP synthase subunit delta.